The chain runs to 53 residues: Conotoxin Cal9.2e (53 aa).

A propeptide spanning residues 1-6 (KKGVTQ) is cleaved from the precursor. 3 disulfide bridges follow: Cys15/Cys32, Cys20/Cys42, and Cys22/Cys47.

In terms of tissue distribution, expressed by the venom duct.

The protein resides in the secreted. In terms of biological role, probable neurotoxin with unknown target. Possibly targets ion channels. The sequence is that of Conotoxin Cal9.2e from Californiconus californicus (California cone).